Here is a 367-residue protein sequence, read N- to C-terminus: Aspartate-semialdehyde dehydrogenase (367 aa).

NADP(+) contacts are provided by residues 10 to 13 (RGMV), 37 to 38 (TS), and Gln73. Arg102 provides a ligand contact to phosphate. Catalysis depends on Cys135, which acts as the Acyl-thioester intermediate. The residue at position 135 (Cys135) is an S-cysteinyl cysteine; in inhibited form. Residue Gln162 coordinates substrate. Residues 165-166 (SG) and Pro193 contribute to the NADP(+) site. A substrate-binding site is contributed by Glu241. Residue Lys244 participates in phosphate binding. Arg267 serves as a coordination point for substrate. The active-site Proton acceptor is His274. Gln350 is a binding site for NADP(+).

The protein belongs to the aspartate-semialdehyde dehydrogenase family. As to quaternary structure, homodimer.

It catalyses the reaction L-aspartate 4-semialdehyde + phosphate + NADP(+) = 4-phospho-L-aspartate + NADPH + H(+). It functions in the pathway amino-acid biosynthesis; L-lysine biosynthesis via DAP pathway; (S)-tetrahydrodipicolinate from L-aspartate: step 2/4. The protein operates within amino-acid biosynthesis; L-methionine biosynthesis via de novo pathway; L-homoserine from L-aspartate: step 2/3. Its pathway is amino-acid biosynthesis; L-threonine biosynthesis; L-threonine from L-aspartate: step 2/5. Functionally, catalyzes the NADPH-dependent formation of L-aspartate-semialdehyde (L-ASA) by the reductive dephosphorylation of L-aspartyl-4-phosphate. The polypeptide is Aspartate-semialdehyde dehydrogenase (Escherichia coli O6:H1 (strain CFT073 / ATCC 700928 / UPEC)).